Reading from the N-terminus, the 161-residue chain is Arachidonate 5-lipoxygenase-activating protein (161 aa).

The Lumenal segment spans residues 1–8 (MDQEAVGN). A helical membrane pass occupies residues 9-30 (VVLLAIVTLISVVQNAFFAHKV). The Cytoplasmic portion of the chain corresponds to 31 to 52 (ELESKAQSGRSFQRTGTLAFER). The chain crosses the membrane as a helical span at residues 53 to 77 (VYTANQNCVDAYPTFLVVLWTAGLL). The Lumenal segment spans residues 78–80 (CSQ). The chain crosses the membrane as a helical span at residues 81 to 102 (VPAAFAGLMYLFVRQKYFVGYL). At 103 to 107 (GERTQ) the chain is on the cytoplasmic side. An intramembrane segment occupies 108–115 (STPGYIFG). Residues 116 to 128 (KRIILFLFLMSLA) form a helical membrane-spanning segment. The Lumenal portion of the chain corresponds to 129–161 (GILNHYLIFFFGSDFENYIRTITTTISPLLLIP).

Belongs to the MAPEG family. In terms of assembly, homotrimer. Interacts with LTC4S and ALOX5.

Its subcellular location is the nucleus membrane. It localises to the endoplasmic reticulum membrane. Required for leukotriene biosynthesis by ALOX5 (5-lipoxygenase). Anchors ALOX5 to the membrane. Binds arachidonic acid, and could play an essential role in the transfer of arachidonic acid to ALOX5. Binds to MK-886, a compound that blocks the biosynthesis of leukotrienes. This chain is Arachidonate 5-lipoxygenase-activating protein (Alox5ap), found in Rattus norvegicus (Rat).